The primary structure comprises 656 residues: DNA topoisomerase 3 (656 aa).

The Toprim domain maps to 2 to 156 (KVLCVAEKNS…QVYRAVFSHL (155 aa)). In terms of domain architecture, Topo IA-type catalytic spans 172-635 (DMKSVHAVGT…DIVEKYRKYW (464 aa)). Tyrosine 356 serves as the catalytic O-(5'-phospho-DNA)-tyrosine intermediate.

Belongs to the type IA topoisomerase family. In terms of assembly, forms a complex with SGS1 and RMI1. Interacts with SGS1.

The enzyme catalyses ATP-independent breakage of single-stranded DNA, followed by passage and rejoining.. Releases the supercoiling and torsional tension of DNA introduced during the DNA replication and transcription by transiently cleaving and rejoining one strand of the DNA duplex. Introduces a single-strand break via transesterification at a target site in duplex DNA. The scissile phosphodiester is attacked by the catalytic tyrosine of the enzyme, resulting in the formation of a DNA-(5'-phosphotyrosyl)-enzyme intermediate and the expulsion of a 3'-OH DNA strand. The free DNA strand than undergoes passage around the unbroken strand thus removing DNA supercoils. Finally, in the religation step, the DNA 3'-OH attacks the covalent intermediate to expel the active-site tyrosine and restore the DNA phosphodiester backbone. Essential for proper chromosome segregation in both meiosis and mitosis. Weakly relaxes negative supercoils and displays a distinct preference for binding single-stranded DNA. The TOP3-SGS1 protein complex may function as a eukaryotic reverse gyrase introducing positive supercoils into extrachromosomal ribosomal DNA rings. The protein is DNA topoisomerase 3 (TOP3) of Saccharomyces cerevisiae (strain ATCC 204508 / S288c) (Baker's yeast).